The chain runs to 425 residues: MQQIFFKDPILGEVLFDQQTKWMYELVETEAFRRLRNIKQLGINFHFYPGGVHTRYSHSLGVYELLRRILNTPAFAPIDENKKQTVLVAGLLHDIGHAPHSHAFEIYFAKAPNFKKELFIHEEVTTLFVNSEPIKSILKANQIDPKLVAALIDENKELKPSNYWMRQLISSDLDADRMDYLLRDSYFTGTSHSLIDYQTIIKEMDCVKVKGIYEIFFKDKCLPLIENFLITRHHMYQSIYSDGRSISTELNLWFVFQRIKDLVDKNQFDFNGYKTLEQVCLPLLKNEHFDKKMLPAFVKLDDYVFQSFFVNLYQTTKDKILKKLLDSYLNSLKFEIKFYETKEQRDLDFEKQASKYKDAKYFITKFNNQFKGFYEGWSSHKNELKIKTMQNKHTNLSEISMLVKRSNELFFENALYKWANVFYRL.

In terms of domain architecture, HD spans 55–181 (RYSHSLGVYE…DLDADRMDYL (127 aa)).

This is an uncharacterized protein from Mycoplasma pneumoniae (strain ATCC 29342 / M129 / Subtype 1) (Mycoplasmoides pneumoniae).